The following is a 291-amino-acid chain: Secretory carrier-associated membrane protein 5 (291 aa).

The segment covering 1-10 has biased composition (basic and acidic residues); it reads MGGRYDRNTF. The interval 1-66 is disordered; that stretch reads MGGRYDRNTF…GSGAQDLKKK (66 aa). The Cytoplasmic portion of the chain corresponds to 1–126; the sequence is MGGRYDRNTF…EILVRLQRLQ (126 aa). Serine 34 carries the post-translational modification Phosphoserine. The stretch at 58-94 forms a coiled coil; sequence SGAQDLKKKEKELQAKEADLRRREQDLKRKQDAAARA. Helical transmembrane passes span 127-147, 159-179, 194-214, and 242-262; these read YIAF…IIAV, IWLL…VLWY, FGWF…AAVA, and IFYF…IWVI. At 263 to 288 the chain is on the cytoplasmic side; that stretch reads QQVYMYFRGSGKADDMRRDAARGAMR.

Belongs to the SCAMP family.

Its subcellular location is the cell membrane. It is found in the cytoplasmic vesicle. The protein localises to the secretory vesicle membrane. Functionally, probably involved in membrane trafficking. This is Secretory carrier-associated membrane protein 5 (SCAMP5) from Arabidopsis thaliana (Mouse-ear cress).